A 122-amino-acid chain; its full sequence is Basic phospholipase A2 homolog Gln49-PLA2 (122 aa).

Disulfide bonds link C26–C115, C28–C44, C43–C95, C49–C122, C50–C88, C57–C81, and C75–C86.

The protein belongs to the phospholipase A2 family. Group II subfamily. Q49 sub-subfamily. Monomer. Expressed by the venom gland.

The protein resides in the secreted. In terms of biological role, snake venom phospholipase A2 (PLA2) homolog that shows local myotoxicity, apparent anticoagulant activity, and neurotoxicity. Shows analgesic effect on mice due to a decrease of action potentials and nerve conduction velocity. These effects are caused by inhibition of voltage-gated ion channels (potassium (Kv) and sodium (Nav)). In addition, analgesic effects are antagonized by naloxone, implying the mechanism of action is correlated with opioid receptors (probably indirectly). Does not show detectable PLA2 activity on egg yolk phospholipids. The polypeptide is Basic phospholipase A2 homolog Gln49-PLA2 (Gloydius ussuriensis (Ussuri mamushi)).